Consider the following 318-residue polypeptide: NADH-ubiquinone oxidoreductase chain 1 (318 aa).

8 consecutive transmembrane segments (helical) span residues 2 to 22 (LLTNILCLMMPILLAVAFLTL), 69 to 89 (LMFIIAPTLAFTLALSLWAPL), 102 to 122 (ILFILAMSSLAVHSILWSGWA), 147 to 167 (AIILLSIMLINGSFTLSTLTI), 172 to 192 (MWLILPTWPLAMMWFISTLAE), 231 to 251 (IILMNALTATLFFGAFHNPLF), 253 to 273 (ELHTINLTTKTLILVFLFLWI), and 294 to 314 (LPLTLALCTWHMTMPISLAGI).

It belongs to the complex I subunit 1 family.

It localises to the mitochondrion inner membrane. The enzyme catalyses a ubiquinone + NADH + 5 H(+)(in) = a ubiquinol + NAD(+) + 4 H(+)(out). Core subunit of the mitochondrial membrane respiratory chain NADH dehydrogenase (Complex I) that is believed to belong to the minimal assembly required for catalysis. Complex I functions in the transfer of electrons from NADH to the respiratory chain. The immediate electron acceptor for the enzyme is believed to be ubiquinone. In Bradypus variegatus (Brown-throated three-fingered sloth), this protein is NADH-ubiquinone oxidoreductase chain 1 (MT-ND1).